The sequence spans 260 residues: Ribonuclease HII (260 aa).

The region spanning 75–260 (ELIAGVDEVG…FEPIKSIIKK (186 aa)) is the RNase H type-2 domain. The a divalent metal cation site is built by D81, E82, and D173.

This sequence belongs to the RNase HII family. It depends on Mn(2+) as a cofactor. Mg(2+) is required as a cofactor.

It is found in the cytoplasm. The catalysed reaction is Endonucleolytic cleavage to 5'-phosphomonoester.. Endonuclease that specifically degrades the RNA of RNA-DNA hybrids. The protein is Ribonuclease HII of Streptococcus thermophilus (strain CNRZ 1066).